The chain runs to 156 residues: Class I hydrophobin B (156 aa).

The signal sequence occupies residues 1 to 18; the sequence is MQFTLSAVVLALAGFSAA. Cystine bridges form between cysteine 52/cysteine 130, cysteine 60/cysteine 124, cysteine 61/cysteine 101, and cysteine 131/cysteine 149.

This sequence belongs to the fungal hydrophobin family.

It is found in the secreted. It localises to the cell wall. Its function is as follows. Aerial growth, conidiation, and dispersal of filamentous fungi in the environment rely upon a capability of their secreting small amphipathic proteins called hydrophobins (HPBs) with low sequence identity. Class I can self-assemble into an outermost layer of rodlet bundles on aerial cell surfaces, conferring cellular hydrophobicity that supports fungal growth, development and dispersal; whereas Class II form highly ordered films at water-air interfaces through intermolecular interactions but contribute nothing to the rodlet structure. In P.expansum, hydrophobins contribute to germination, tolerance to cold stress and mycotoxins patulin and citrinin production. HfbA and HfbB are essential for fungal surface hydrophobicity. The protein is Class I hydrophobin B of Penicillium expansum (Blue mold rot fungus).